Reading from the N-terminus, the 567-residue chain is Restriction of telomere capping protein 5 (567 aa).

The TLDc domain maps to 289–515; it reads KVMTPALLAQ…IQDVEVWGCG (227 aa).

Belongs to the RTC5 family.

It localises to the cytoplasm. May be involved in a process influencing telomere capping. The sequence is that of Restriction of telomere capping protein 5 (RTC5) from Saccharomyces cerevisiae (strain YJM789) (Baker's yeast).